A 62-amino-acid polypeptide reads, in one-letter code: Defensin BmKDfsin5 (62 aa).

An N-terminal signal peptide occupies residues methionine 1–alanine 24. Disulfide bonds link cysteine 28–cysteine 49, cysteine 35–cysteine 57, and cysteine 39–cysteine 59.

The protein belongs to the invertebrate defensin family. Type 2 subfamily. Highly expressed in non-venom gland (hemolymph) and moderately expressed in venom gland.

The protein resides in the secreted. Its function is as follows. Antibacterial peptide active against Gram-positive bacteria (including S.aureus ATCC25923 (MIC=2.5 uM), M.luteus AB93113 (MIC=2.5 uM), and the antibiotic-resistant S.epidermidis PRSE P1389 (MIC=1.25 uM)), but not against Gram-negative bacteria (including E.coli and P.aeruginosa). Also has weak blocking activity on Kv1.1/KCNA1 (8.7% inhibition), Kv1.2/KCNA2 (10.2% inhibition), Kv1.3/KCNA3 (9.0% inhibition), KCa3.1/KCNN4/IK (9.1% inhibition), KCa2.3/KCNN3/SK3 (46.3% inhibition) and Kv11.1/KCNH2/ERG1 (16.9% inhibition) channels (tested at 1 uM). It inhibits potassium channel current by interacting with the pore region. This Olivierus martensii (Manchurian scorpion) protein is Defensin BmKDfsin5.